A 573-amino-acid chain; its full sequence is IRHESTVTGGVQDVYGEDSATEDQSITPWTLSVASGFSLLRNPHYNKGLAFSERERDTHYLRGLLPPVVISHDLQVKKMMNSIRKYDVPLQRYMAMMDLQEMNERLFYKLLIDNVEELLPIVYTPTVGEACQKYGWIFKRPQGLFFSLKEKGKIHEVLKNWPEKKIQVIVVTDGERILGLGDLGCQGMGIPVGKLSLYSALGGIRPSACLPVTIDVGQTMKFVDDEFYIGLRQRRATGQEYSELLDEFMYAVKQNYGEKVLIQFEDFANHNAFNLLAKYGTSHLVFNDDIQGTASVVLAGLMAALNLVGGSLSEHTFLFLGAGEAGTGIAELIALEMSKQTGIPLEETRKKIWMVDSKGLIVKSRMEMLQHFKRPWAHDHEPVQELVNAVKSIKPTVLIGSSGAGRTFTKEVVQAMATFNEKPIIFALSNPTSQSECTAEEAYSWSEGRAIFASGSPFAPVEYNGKVYASGQANNAYIFPGFGLGLIISGAIRVHDDMLLVASEALADEVSQENFEKGTHIPPFSNIRKISAHIAKVAAKAYELGLATRLPQPKDLVAYAESCMYSPAYRSYR.

Tyr-123 (proton donor) is an active-site residue. Arg-176 is a binding site for NAD(+). Lys-194 (proton acceptor) is an active-site residue. Residues Glu-265, Asp-266, and Asp-289 each contribute to the a divalent metal cation site. Asp-289 provides a ligand contact to NAD(+). 318-334 (LFLGAGEAGTGIAELIA) provides a ligand contact to NADP(+). Residue Asn-430 coordinates NAD(+).

This sequence belongs to the malic enzymes family. Homotetramer. Requires Mg(2+) as cofactor. Mn(2+) is required as a cofactor.

It localises to the plastid. It is found in the chloroplast. It catalyses the reaction (S)-malate + NADP(+) = pyruvate + CO2 + NADPH. It carries out the reaction oxaloacetate + H(+) = pyruvate + CO2. Its pathway is photosynthesis; C4 acid pathway. Its function is as follows. The chloroplastic ME isoform decarboxylates malate shuttled from neighboring mesophyll cells. The CO(2) released is then refixed by ribulose-bisphosphate carboxylase. This pathway eliminates the photorespiratory loss of CO(2) that occurs in most plants. The sequence is that of NADP-dependent malic enzyme, chloroplastic from Solanum lycopersicum (Tomato).